A 199-amino-acid chain; its full sequence is Elongation factor Ts, chloroplastic (199 aa).

It belongs to the EF-Ts family.

The protein resides in the plastid. It localises to the chloroplast. In terms of biological role, associates with the EF-Tu.GDP complex and induces the exchange of GDP to GTP. It remains bound to the aminoacyl-tRNA.EF-Tu.GTP complex up to the GTP hydrolysis stage on the ribosome. The sequence is that of Elongation factor Ts, chloroplastic (tsf) from Galdieria sulphuraria (Red alga).